Reading from the N-terminus, the 131-residue chain is DNA-binding protein inhibitor ID-4 (131 aa).

A bHLH domain is found at 36-88 (ARYKMEEEETLCLQYDMNDCYSRLKRLVPTIPPNKKVSKVEILQHVIDYILDL).

In terms of assembly, heterodimer with other HLH proteins. As to expression, during embryonic development, expressed in a number of neural tissues, including Rohon-Beard neurons, olfactory placode, eye primordia, and the trigeminal ganglia. Also expressed in other organs including the pronephros and liver primordium. Pronephric development begins by stage 25 and increases during tailbud stages. Expressed in both the tubules and the duct. As embryogenesis progresses, expressed in the migrating melanocytes and lateral line structures.

It localises to the nucleus. Transcriptional regulator (lacking a basic DNA binding domain) which negatively regulates the basic helix-loop-helix (bHLH) transcription factors by forming heterodimers and inhibiting their DNA binding and transcriptional activity. Inhibits the activity of both neurogenic (neurog1/neurogenin, neurod1/neuroD) and myogenic (myod1/myoD) bHLH factors. The sequence is that of DNA-binding protein inhibitor ID-4 from Xenopus laevis (African clawed frog).